A 915-amino-acid polypeptide reads, in one-letter code: DNA repair-scaffolding protein (915 aa).

The span at 1–15 shows a compositional bias: basic residues; sequence MPRGSRARGSKRKRS. 2 disordered regions span residues 1 to 30 and 56 to 114; these read MPRGSRARGSKRKRSWNTECPSFPGERPLQ and FQNT…EDKT. Positions 56 to 65 are enriched in polar residues; that stretch reads FQNTSGNPSL. The span at 67–85 shows a compositional bias: basic and acidic residues; the sequence is AEEKTITEKHLELCPRPKQ. Residues 86–107 show a composition bias toward polar residues; it reads ETTTSKSTSGLTDITWSSSGSD. Positions 151–450 are necessary for interaction with RAD51; sequence EISDCASCAS…GTAWTHGHKE (300 aa).

Found in a complex, at least composed of BLM, RAD51 and SPIDR; the complex formation is mediated by SPIDR. Interacts (via C-terminal region) with BLM; the interaction is direct. Interacts with RAD51; the interaction is direct. Interacts (via the C-terminal region) with FIGNL1 (via N-terminal one-half region); the interaction is direct.

The protein resides in the nucleus. In terms of biological role, plays a role in DNA double-strand break (DBS) repair via homologous recombination (HR). Serves as a scaffolding protein that helps to promote the recruitment of DNA-processing enzymes like the helicase BLM and recombinase RAD51 to site of DNA damage, and hence contributes to maintain genomic integrity. The chain is DNA repair-scaffolding protein (SPIDR) from Homo sapiens (Human).